The primary structure comprises 148 residues: Protein-export protein SecB (148 aa).

This sequence belongs to the SecB family. Homotetramer, a dimer of dimers. One homotetramer interacts with 1 SecA dimer.

It is found in the cytoplasm. In terms of biological role, one of the proteins required for the normal export of preproteins out of the cell cytoplasm. It is a molecular chaperone that binds to a subset of precursor proteins, maintaining them in a translocation-competent state. It also specifically binds to its receptor SecA. In Psychrobacter arcticus (strain DSM 17307 / VKM B-2377 / 273-4), this protein is Protein-export protein SecB.